The sequence spans 510 residues: 2,3-bisphosphoglycerate-independent phosphoglycerate mutase (510 aa).

Mn(2+)-binding residues include D12 and S62. S62 functions as the Phosphoserine intermediate in the catalytic mechanism. Residues H123, 152 to 153, R184, R190, 257 to 260, and K331 contribute to the substrate site; these read RD and RADR. 5 residues coordinate Mn(2+): D399, H403, D440, H441, and H458.

Belongs to the BPG-independent phosphoglycerate mutase family. Monomer. It depends on Mn(2+) as a cofactor.

The catalysed reaction is (2R)-2-phosphoglycerate = (2R)-3-phosphoglycerate. Its pathway is carbohydrate degradation; glycolysis; pyruvate from D-glyceraldehyde 3-phosphate: step 3/5. Catalyzes the interconversion of 2-phosphoglycerate and 3-phosphoglycerate. This is 2,3-bisphosphoglycerate-independent phosphoglycerate mutase from Lawsonia intracellularis (strain PHE/MN1-00).